A 311-amino-acid polypeptide reads, in one-letter code: Oxygen-dependent coproporphyrinogen-III oxidase (311 aa).

Serine 100 is a binding site for substrate. The a divalent metal cation site is built by histidine 104 and histidine 114. Histidine 114 (proton donor) is an active-site residue. 116–118 serves as a coordination point for substrate; that stretch reads NVR. A divalent metal cation is bound by residues histidine 153 and histidine 183. Residues 248–283 form an important for dimerization region; sequence YAEFNLVYDRGTLFGLQSGGRTESILMSLPPIVHWE. 266 to 268 lines the substrate pocket; sequence GGR.

It belongs to the aerobic coproporphyrinogen-III oxidase family. In terms of assembly, homodimer. The cofactor is a divalent metal cation.

It localises to the cytoplasm. The catalysed reaction is coproporphyrinogen III + O2 + 2 H(+) = protoporphyrinogen IX + 2 CO2 + 2 H2O. Its pathway is porphyrin-containing compound metabolism; protoporphyrin-IX biosynthesis; protoporphyrinogen-IX from coproporphyrinogen-III (O2 route): step 1/1. Involved in the heme biosynthesis. Catalyzes the aerobic oxidative decarboxylation of propionate groups of rings A and B of coproporphyrinogen-III to yield the vinyl groups in protoporphyrinogen-IX. This chain is Oxygen-dependent coproporphyrinogen-III oxidase, found in Legionella pneumophila (strain Corby).